A 677-amino-acid chain; its full sequence is MHSWRISKFKLGRSKEDDGSSEDENEKSWGNGLFHFHHGEKHHDGSPKNHNHEHEHHIRKINTNETLPSSLSSPKLRNDASFKNPSGIGNDNSKASERKASQSSTETQGPSSESGLMTVKVYSGKDFTLPFPITSNSTILQKLLSSGILTSSSNDASEVAAIMRQLPRYKRVDQDSAGEGLIDRAFATKFIPSSILLPGSTNSSPLLYFTIEFDNSITTISPDMGTMEQPVFNKISTFDVTRKLRFLKIDVFARIPSLLLPSKNWQQEIGEQDEVLKEILKKINTNQDIHLDSFHLPLNLKIDSAAQIRLYNHHWISLERGYGKLNITVDYKPSKNKPLSIDDFDLLKVIGKGSFGKVMQVRKKDTQKIYALKALRKAYIVSKCEVTHTLAERTVLARVDCPFIVPLKFSFQSPEKLYLVLAFINGGELFYHLQHEGRFSLARSRFYIAELLCALDSLHKLDVIYRDLKPENILLDYQGHIALCDFGLCKLNMKDNDKTDTFCGTPEYLAPEILLGQGYTKTVDWWTLGILLYEMMTGLPPYYDENVPVMYKKILQQPLLFPDGFDPAAKDLLIGLLSRDPSRRLGVNGTDEIRNHPFFKDISWKKLLLKGYIPPYKPIVKSEIDTANFDQEFTKEKPIDSVVDEYLSASIQKQFGGWTYIGDEQLGDSPSQGRSIS.

The segment covering 1-12 (MHSWRISKFKLG) has biased composition (basic residues). The interval 1-115 (MHSWRISKFK…ETQGPSSESG (115 aa)) is disordered. Residues 41–56 (KHHDGSPKNHNHEHEH) show a composition bias toward basic and acidic residues. Composition is skewed to polar residues over residues 61-93 (INTN…NDNS) and 101-115 (SQSS…SESG). 2 positions are modified to phosphothreonine: T63 and T66. S72 bears the Phosphoserine mark. One can recognise a Protein kinase domain in the interval 344–599 (FDLLKVIGKG…TDEIRNHPFF (256 aa)). Residues 350-358 (IGKGSFGKV) and K373 each bind ATP. D467 serves as the catalytic Proton acceptor. Residue T499 is modified to Phosphothreonine. T501 is modified (phosphothreonine; by PKH2). Residues 600 to 670 (KDISWKKLLL…IGDEQLGDSP (71 aa)) enclose the AGC-kinase C-terminal domain. S641 bears the Phosphoserine; by TOR2 mark. Phosphoserine is present on S650. T659 carries the post-translational modification Phosphothreonine; by TOR2. Position 669 is a phosphoserine (S669).

This sequence belongs to the protein kinase superfamily. AGC Ser/Thr protein kinase family. RAC subfamily. Autophosphorylated. Phosphorylated by PKH2 and TOR2.

The protein resides in the cytoplasm. The catalysed reaction is L-seryl-[protein] + ATP = O-phospho-L-seryl-[protein] + ADP + H(+). It catalyses the reaction L-threonyl-[protein] + ATP = O-phospho-L-threonyl-[protein] + ADP + H(+). Its activity is regulated as follows. Activated by phytosphingosine (PHS), a sphingoid long chain base. Activated by PKH2 phosphorylation. Kinase activity is regulated by TOR2 via direct phosphorylation of Ser-641 and Thr-659. In terms of biological role, plays an essential role in the proliferation of yeast cells. Involved in a signaling pathway, required for optimal cell wall integrity, that acts in parallel with the PKC1-SLT2-dependent pathway. A substrate of TOR complex 2 (TORC2) and required for TORC2 to regulate spatial aspects of cell growth. Phosphorylation of residue Thr-501 is indispensable for function. May act as a downstream kinase in the sphingolipid-mediated signaling pathway. In Saccharomyces cerevisiae (strain ATCC 204508 / S288c) (Baker's yeast), this protein is Serine/threonine-protein kinase YPK2/YKR2 (YPK2).